Here is a 91-residue protein sequence, read N- to C-terminus: MNVKKAAAVFSITIPIISAILIINFFTGFMSIPWQGMPVFFPLLLSPIGIILAFVSIKTNKRCAVYGIVLNAIMFPFPFFWFIGGALLFGV.

3 consecutive transmembrane segments (helical) span residues 6 to 26, 37 to 57, and 68 to 88; these read AAAVFSITIPIISAILIINFF, MPVFFPLLLSPIGIILAFVSI, and IVLNAIMFPFPFFWFIGGALL.

Its subcellular location is the cell membrane. This is an uncharacterized protein from Bacillus subtilis (strain 168).